The primary structure comprises 347 residues: NADH-ubiquinone oxidoreductase chain 2 (347 aa).

A run of 10 helical transmembrane segments spans residues 3–23 (PIIL…TMIS), 25–45 (HWLL…PILM), 59–79 (YFLT…INTA), 96–116 (LVTM…FWVP), 127–147 (GMLL…QIFP), 150–170 (NPNI…WGGL), 193–213 (ILMY…MLTI), 240–260 (ITLT…LTGF), 274–294 (SNIM…YFYM), and 323–343 (IFLL…SPAL).

Belongs to the complex I subunit 2 family. As to quaternary structure, core subunit of respiratory chain NADH dehydrogenase (Complex I) which is composed of 45 different subunits. Interacts with TMEM242.

The protein resides in the mitochondrion inner membrane. It carries out the reaction a ubiquinone + NADH + 5 H(+)(in) = a ubiquinol + NAD(+) + 4 H(+)(out). Functionally, core subunit of the mitochondrial membrane respiratory chain NADH dehydrogenase (Complex I) which catalyzes electron transfer from NADH through the respiratory chain, using ubiquinone as an electron acceptor. Essential for the catalytic activity and assembly of complex I. This Lemur catta (Ring-tailed lemur) protein is NADH-ubiquinone oxidoreductase chain 2.